Here is a 334-residue protein sequence, read N- to C-terminus: 4-hydroxyproline 2-epimerase (334 aa).

Cys-91 functions as the Proton acceptor in the catalytic mechanism. Substrate-binding positions include Gly-92 to His-93, His-224, and Asp-250. The Proton donor role is filled by Cys-254. Gly-255–Thr-256 is a binding site for substrate.

This sequence belongs to the proline racemase family.

The enzyme catalyses trans-4-hydroxy-L-proline = cis-4-hydroxy-D-proline. Functionally, catalyzes the epimerization of trans-4-hydroxy-L-proline (t4LHyp) to cis-4-hydroxy-D-proline (c4DHyp). Is likely involved in a degradation pathway that converts t4LHyp to alpha-ketoglutarate. Displays no proline racemase activity. The sequence is that of 4-hydroxyproline 2-epimerase from Spirosoma linguale (strain ATCC 33905 / DSM 74 / LMG 10896 / Claus 1).